The sequence spans 205 residues: LexA repressor (205 aa).

The segment at residues 28–48 (RAELMRAFDFRSPNAAESHLR) is a DNA-binding region (H-T-H motif). Residues Ser-120 and Lys-159 each act as for autocatalytic cleavage activity in the active site.

This sequence belongs to the peptidase S24 family. Homodimer.

It catalyses the reaction Hydrolysis of Ala-|-Gly bond in repressor LexA.. In terms of biological role, represses a number of genes involved in the response to DNA damage (SOS response), including recA and lexA. In the presence of single-stranded DNA, RecA interacts with LexA causing an autocatalytic cleavage which disrupts the DNA-binding part of LexA, leading to derepression of the SOS regulon and eventually DNA repair. The chain is LexA repressor from Acidithiobacillus ferrooxidans (strain ATCC 23270 / DSM 14882 / CIP 104768 / NCIMB 8455) (Ferrobacillus ferrooxidans (strain ATCC 23270)).